A 768-amino-acid polypeptide reads, in one-letter code: Phosphoribosylformylglycinamidine synthase subunit PurL (768 aa).

The active site involves H44. Residues Y47 and K86 each coordinate ATP. E88 contributes to the Mg(2+) binding site. Residues 89–92 (SHNH) and R111 each bind substrate. The active-site Proton acceptor is H90. D112 is a binding site for Mg(2+). Q235 serves as a coordination point for substrate. Position 263 (D263) interacts with Mg(2+). 307–309 (ESQ) is a substrate binding site. Positions 518 and 555 each coordinate ATP. N556 contributes to the Mg(2+) binding site. S558 contributes to the substrate binding site.

The protein belongs to the FGAMS family. In terms of assembly, monomer. Part of the FGAM synthase complex composed of 1 PurL, 1 PurQ and 2 PurS subunits.

Its subcellular location is the cytoplasm. It catalyses the reaction N(2)-formyl-N(1)-(5-phospho-beta-D-ribosyl)glycinamide + L-glutamine + ATP + H2O = 2-formamido-N(1)-(5-O-phospho-beta-D-ribosyl)acetamidine + L-glutamate + ADP + phosphate + H(+). The protein operates within purine metabolism; IMP biosynthesis via de novo pathway; 5-amino-1-(5-phospho-D-ribosyl)imidazole from N(2)-formyl-N(1)-(5-phospho-D-ribosyl)glycinamide: step 1/2. Its function is as follows. Part of the phosphoribosylformylglycinamidine synthase complex involved in the purines biosynthetic pathway. Catalyzes the ATP-dependent conversion of formylglycinamide ribonucleotide (FGAR) and glutamine to yield formylglycinamidine ribonucleotide (FGAM) and glutamate. The FGAM synthase complex is composed of three subunits. PurQ produces an ammonia molecule by converting glutamine to glutamate. PurL transfers the ammonia molecule to FGAR to form FGAM in an ATP-dependent manner. PurS interacts with PurQ and PurL and is thought to assist in the transfer of the ammonia molecule from PurQ to PurL. This chain is Phosphoribosylformylglycinamidine synthase subunit PurL, found in Synechococcus sp. (strain JA-2-3B'a(2-13)) (Cyanobacteria bacterium Yellowstone B-Prime).